The primary structure comprises 348 residues: Probable purine nucleoside permease C285.05 (348 aa).

An N-terminal signal peptide occupies residues 1–21 (MLFLKLVASVLALMTIVPAQA).

Belongs to the NUP family.

It is found in the endoplasmic reticulum. Probable nucleoside permease that transports adenosine and guanosine. In Schizosaccharomyces pombe (strain 972 / ATCC 24843) (Fission yeast), this protein is Probable purine nucleoside permease C285.05.